Reading from the N-terminus, the 396-residue chain is Elongation factor Tu (396 aa).

Positions 10-206 constitute a tr-type G domain; the sequence is KPHCNIGTIG…AVDSYIPQPE (197 aa). Residues 19 to 26 are G1; the sequence is GHVDHGKT. 19-26 lines the GTP pocket; that stretch reads GHVDHGKT. Mg(2+) is bound at residue Thr-26. The tract at residues 60-64 is G2; it reads GITIS. A G3 region spans residues 81–84; that stretch reads DCPG. GTP contacts are provided by residues 81–85 and 136–139; these read DCPGH and NKVD. Positions 136–139 are G4; the sequence is NKVD. Positions 174–176 are G5; sequence SAV.

The protein belongs to the TRAFAC class translation factor GTPase superfamily. Classic translation factor GTPase family. EF-Tu/EF-1A subfamily. In terms of assembly, monomer.

It is found in the cytoplasm. It carries out the reaction GTP + H2O = GDP + phosphate + H(+). Its function is as follows. GTP hydrolase that promotes the GTP-dependent binding of aminoacyl-tRNA to the A-site of ribosomes during protein biosynthesis. The chain is Elongation factor Tu from Rhizorhabdus wittichii (strain DSM 6014 / CCUG 31198 / JCM 15750 / NBRC 105917 / EY 4224 / RW1) (Sphingomonas wittichii).